The primary structure comprises 371 residues: Beta-1,3-galactosyltransferase 4 (371 aa).

At 1 to 4 the chain is on the cytoplasmic side; the sequence is MPLS. Residues 5–25 form a helical; Signal-anchor for type II membrane protein membrane-spanning segment; that stretch reads LFRRVLLAVLLLVIIWTLFGP. The Lumenal segment spans residues 26–371; the sequence is SGLGEELLSL…RCRFIAWFSS (346 aa). A glycan (N-linked (GlcNAc...) asparagine) is linked at asparagine 143.

The protein belongs to the glycosyltransferase 31 family. As to expression, expressed in heart, brain, spleen, kidney, lung and testis.

The protein resides in the golgi apparatus membrane. The catalysed reaction is a ganglioside GM2 (d18:1(4E)) + UDP-alpha-D-galactose = a ganglioside GM1 (d18:1(4E)) + UDP + H(+). It catalyses the reaction a ganglioside GM2 + UDP-alpha-D-galactose = a ganglioside GM1 + UDP + H(+). The enzyme catalyses a ganglioside GD2 (d18:1(4E)) + UDP-alpha-D-galactose = a ganglioside GD1b (d18:1(4E)) + UDP + H(+). It carries out the reaction a ganglioside GA2 (d18:1(4E)) + UDP-alpha-D-galactose = a ganglioside GA1 (d18:1(4E)) + UDP + H(+). It participates in protein modification; protein glycosylation. Functionally, involved in GM1/GD1B/GA1 ganglioside biosynthesis. This is Beta-1,3-galactosyltransferase 4 from Mus musculus (Mouse).